Here is a 446-residue protein sequence, read N- to C-terminus: Histidine--tRNA ligase (446 aa).

The protein belongs to the class-II aminoacyl-tRNA synthetase family. Homodimer.

It is found in the cytoplasm. It catalyses the reaction tRNA(His) + L-histidine + ATP = L-histidyl-tRNA(His) + AMP + diphosphate + H(+). This Burkholderia cenocepacia (strain ATCC BAA-245 / DSM 16553 / LMG 16656 / NCTC 13227 / J2315 / CF5610) (Burkholderia cepacia (strain J2315)) protein is Histidine--tRNA ligase.